A 285-amino-acid polypeptide reads, in one-letter code: Tumor necrosis factor ligand superfamily member 13B (285 aa).

The Cytoplasmic segment spans residues 1–46 (MDDSTEREQSRLTSCLKKREEMKLKECVSILPRKESPSVRSSKDGK). Residues 47–67 (LLAATLLLALLSCCLTVVSFY) form a helical; Signal-anchor for type II membrane protein membrane-spanning segment. Residues 68–285 (QVAALQGDLA…VTFFGALKLL (218 aa)) lie on the Extracellular side of the membrane. The interval 114–138 (IFEPPAPGEGNSSQNSRNKRAVQGP) is disordered. N-linked (GlcNAc...) asparagine glycosylation occurs at N124. Residues 145-284 (DCLQLIADSE…DVTFFGALKL (140 aa)) enclose the THD domain. C232 and C245 are oxidised to a cystine. N242 is a glycosylation site (N-linked (GlcNAc...) (high mannose) asparagine).

The protein belongs to the tumor necrosis factor family. In terms of assembly, homotrimer. Isoform 2 heteromultimerizes with isoform 1, probably limiting the amount of functional isoform 1 on the cell surface. Isoform 3 is unlikely form trimers or bind to BAFF receptors. Post-translationally, the soluble form derives from the membrane form by proteolytic processing. In terms of processing, isoform 2 is not efficiently shed from the membrane unlike isoform 1. N-glycosylated. In terms of tissue distribution, abundantly expressed in peripheral blood Leukocytes and is specifically expressed in monocytes and macrophages. Also found in the spleen, lymph node, bone marrow, T-cells and dendritic cells. A lower expression seen in placenta, heart, lung, fetal liver, thymus, and pancreas. Isoform 2 is expressed in many myeloid cell lines.

The protein localises to the cell membrane. It localises to the secreted. In terms of biological role, cytokine that binds to TNFRSF13B/TACI and TNFRSF17/BCMA. TNFSF13/APRIL binds to the same 2 receptors. Together, they form a 2 ligands -2 receptors pathway involved in the stimulation of B- and T-cell function and the regulation of humoral immunity. A third B-cell specific BAFF-receptor (BAFFR/BR3) promotes the survival of mature B-cells and the B-cell response. Functionally, isoform 2 seems to inhibit isoform 1 secretion and bioactivity. Its function is as follows. Acts as a transcription factor for its own parent gene, in association with NF-kappa-B p50 subunit, at least in autoimmune and proliferative B-cell diseases. The presence of Delta4BAFF is essential for soluble BAFF release by IFNG/IFN-gamma-stimulated monocytes and for B-cell survival. It can directly or indirectly regulate the differential expression of a large number of genes involved in the innate immune response and the regulation of apoptosis. This chain is Tumor necrosis factor ligand superfamily member 13B (TNFSF13B), found in Homo sapiens (Human).